A 344-amino-acid chain; its full sequence is MNSKMLKHLRLATLSFSMFFGIVSSPAVYALGAGNPAAPVLPGVNPEQTGWCAFQLCNSYDLFAALAGSLKFGFYGDYVFSESAHITNVPVITSVTTSGTGTTPTITSTTKNVDFDLNNSSISSSCVFATIALQETSPAAIPLLDIAFTARVGGLKQYYRLPLNAYRDFTSNPLNAESEVTDGLIEVQSDYGIVWGLSLQKVLWKDGVSFVGVSADYRHGSSPINYIIVYNKANPEIYFDATDGNLSYKEWSASIGISTYLNDYVLPYASVSIGNTSRKAPSDSFTELEKQFTNFKFKIRKITNFDRVNFCFGTTCCISNNFYYSVEGRWGYQRAINITSGLQF.

The signal sequence occupies residues 1–30 (MNSKMLKHLRLATLSFSMFFGIVSSPAVYA).

This sequence belongs to the chlamydial OMP family.

The protein resides in the cell outer membrane. The protein is Outer membrane protein B (ompB) of Chlamydia pneumoniae (Chlamydophila pneumoniae).